The following is a 294-amino-acid chain: Indole-3-glycerol phosphate synthase (294 aa).

This sequence belongs to the TrpC family.

It carries out the reaction 1-(2-carboxyphenylamino)-1-deoxy-D-ribulose 5-phosphate + H(+) = (1S,2R)-1-C-(indol-3-yl)glycerol 3-phosphate + CO2 + H2O. Its pathway is amino-acid biosynthesis; L-tryptophan biosynthesis; L-tryptophan from chorismate: step 4/5. This Crocosphaera subtropica (strain ATCC 51142 / BH68) (Cyanothece sp. (strain ATCC 51142)) protein is Indole-3-glycerol phosphate synthase.